We begin with the raw amino-acid sequence, 569 residues long: Urease subunit alpha (569 aa).

In terms of domain architecture, Urease spans 131-569; it reads GGIDSHIHFI…LPLAQRYFLF (439 aa). Residues His-136, His-138, and Lys-219 each coordinate Ni(2+). Lys-219 is modified (N6-carboxylysine). Substrate is bound at residue His-221. The Ni(2+) site is built by His-248 and His-274. Catalysis depends on His-322, which acts as the Proton donor. Asp-362 is a binding site for Ni(2+).

It belongs to the metallo-dependent hydrolases superfamily. Urease alpha subunit family. Heterotrimer of UreA (gamma), UreB (beta) and UreC (alpha) subunits. Three heterotrimers associate to form the active enzyme. Requires Ni cation as cofactor. Post-translationally, carboxylation allows a single lysine to coordinate two nickel ions.

It is found in the cytoplasm. The catalysed reaction is urea + 2 H2O + H(+) = hydrogencarbonate + 2 NH4(+). The protein operates within nitrogen metabolism; urea degradation; CO(2) and NH(3) from urea (urease route): step 1/1. This is Urease subunit alpha from Herpetosiphon aurantiacus (strain ATCC 23779 / DSM 785 / 114-95).